Reading from the N-terminus, the 69-residue chain is Fungal defensin oryzeasin (69 aa).

Positions 1–18 are cleaved as a signal peptide; the sequence is MKLLTVAFSLLLLGQVHA. The propeptide occupies 19-26; that stretch reads SPLVLDKR. 3 disulfide bridges follow: C29–C60, C44–C66, and C48–C68.

This sequence belongs to the invertebrate defensin family.

The protein resides in the secreted. It localises to the target cell membrane. In terms of biological role, shows antibacterial activity against numerous Gram-positive bacteria. It selectively inhibits peptidoglycan biosynthesis through complex formation with the cell wall precursor lipid II (1:1 molar ratio) thus inhibiting cell wall synthesis. This Aspergillus oryzae (strain ATCC 42149 / RIB 40) (Yellow koji mold) protein is Fungal defensin oryzeasin.